The sequence spans 350 residues: Phosphatidylinositol transfer protein PDR17 (350 aa).

In terms of domain architecture, CRAL-TRIO spans 139–297; sequence KVAVENETGK…LYNGLLDFKY (159 aa).

As to quaternary structure, interacts with phosphatidylserine decarboxylase PSD2. Also interacts with PBI1.

The protein localises to the cytoplasm. It localises to the microsome. It catalyses the reaction a 1,2-diacyl-sn-glycero-3-phospho-(1D-myo-inositol)(in) = a 1,2-diacyl-sn-glycero-3-phospho-(1D-myo-inositol)(out). Its function is as follows. Has phosphatidylinositol transfer activity. Involved in the regulation of the phospholipid composition of plasma- and endomembranes. Altering plasma membrane composition may provide a possible mechanism for multidrug resistance. Contributes to efficient phospholipase D1 activation and phospholipase B1 inhibition in the regulation of phospholipid turnover. Forms a complex with phosphatidylserine decarboxylase PSD2 that seems essential for maintenance of vacuolar phosphatidylethanolamine (PE) levels. Allows interorganelle phosphatidylserine (PtdSer) transport via a process that involves the acceptor membrane complex PDR17-PDS2 that binds to PBI1 which in turn ligates to SCS2 and phosphatidic acid present in the donor membrane, forming a zone of apposition that facilitates PtdSer transfer. The chain is Phosphatidylinositol transfer protein PDR17 from Saccharomyces cerevisiae (strain ATCC 204508 / S288c) (Baker's yeast).